The following is a 330-amino-acid chain: 2-alkyl-3-oxoalkanoate reductase (330 aa).

The active-site Proton acceptor is Y139. K143 lines the NADP(+) pocket.

The protein belongs to the 3-beta-HSD family. In terms of assembly, homodimer.

It catalyses the reaction a (2R,3S)-2-alkyl-3-hydroxyalkanoate + NADP(+) = an (R)-2-alkyl-3-oxoalkanoate + NADPH + H(+). Functionally, involved in olefin biosynthesis. Catalyzes the reversible stereospecific NADPH-dependent reduction of 2-alkyl-3-oxoalkanoic acids to 2-alkyl-3-hydroxyalkanoic acids. In the oxidative direction, syn-2-decyl-3-hydroxytetradecanoic acid is the preferred substrate. In the reductive direction, (2R/S)-2-hexyl-3-ketodecanoic acid is accepted as substrate. This is 2-alkyl-3-oxoalkanoate reductase from Stenotrophomonas maltophilia (strain K279a).